A 64-amino-acid polypeptide reads, in one-letter code: Large ribosomal subunit protein eL37 (64 aa).

The segment at 1-6 adopts a C4-type zinc-finger fold; that stretch reads GRCSAC. The Zn(2+) site is built by Cys3 and Cys6.

It belongs to the eukaryotic ribosomal protein eL37 family. Zn(2+) serves as cofactor.

Binds to the 23S rRNA. This is Large ribosomal subunit protein eL37 (RPL37) from Solanum lycopersicum (Tomato).